The following is a 626-amino-acid chain: Nuclear receptor subfamily 4 group A member 3 (626 aa).

The segment at 1–108 (MPCVQAQYSP…HHHHHHHHHH (108 aa)) is activation function (AF)-1 domain. A required for DNA-PK heterotrimer region spans residues 1–138 (MPCVQAQYSP…PSTSMYFKQS (138 aa)). The tract at residues 1-291 (MPCVQAQYSP…SRSSSSGEGT (291 aa)) is interaction with NCOA1, NCOA2, NCOA3 and KAT2B. Disordered stretches follow at residues 92-152 (PSYH…PPQA), 192-211 (HFKPSPPHPPAPSPAGGHHL), and 265-284 (PTASSLLGESPSLPSPPSRS). Over residues 93–110 (SYHHHHHHHHHHHHHHQQ) the composition is skewed to basic residues. Composition is skewed to pro residues over residues 140-149 (PSTPTTPAFP) and 195-204 (PSPPHPPAPS). Over residues 268–284 (SSLLGESPSLPSPPSRS) the composition is skewed to low complexity. Residues 289–364 (EGTCAVCGDN…VGMVKEVVRT (76 aa)) constitute a DNA-binding region (nuclear receptor). 2 NR C4-type zinc fingers span residues 292–312 (CAVCGDNAACQHYGVRTCEGC) and 328–352 (CLANKNCPVDKRRRNRCQYCRFQKC). The interval 364–394 (TDSLKGRRGRLPSKPKSPLQQEPSQPSPPSP) is disordered. Residues 377 to 387 (KPKSPLQQEPS) are compositionally biased toward low complexity. The tract at residues 379–626 (KSPLQQEPSQ…DKLFLDTLPF (248 aa)) is interaction with KAT2B. The 230-residue stretch at 394-623 (PPICMMNALV…SIIDKLFLDT (230 aa)) folds into the NR LBD domain.

It belongs to the nuclear hormone receptor family. NR4 subfamily. In terms of assembly, interacts with SIX3 (via homeobox); differentially regulates the transcriptional activities of NR4A3. Interacts with the constituents of DNA-PK heterotrimer PRKDC, XRCC6 and XRCC5; phosphorylates and prevents NR4A3 ubiquitinylation and degradation. Interacts with NCOA2; potentiates the activity of the NR4A3. Interacts with NCOA1, NCOA3, MED1 and KAT2B. Interacts with EP300 and NCOA2; mediates the recruitment of MED1 in the coactivator complex. Interacts with NR3C1 (via nuclear receptor DNA-binding domain); the interactions represses transcription activity of NR4A3 on the POMC promoter Nur response element (NurRE). Interacts with TRIM28; the interactions potentiates NR4A3 activity on NurRE promoter. Binds DNA as a monomer and homodimer. Interacts with PARP1; activates PARP1 by improving acetylation of PARP1 and suppressing the interaction between PARP1 and SIRT1. Post-translationally, phosphorylated by PRKDC. As to expression, isoform alpha is highly expressed in skeletal muscle. Isoform beta is highly expressed in skeletal muscle and low expressed in fetal brain and placenta.

The protein localises to the nucleus. In terms of biological role, transcriptional activator that binds to regulatory elements in promoter regions in a cell- and response element (target)-specific manner. Induces gene expression by binding as monomers to the NR4A1 response element (NBRE) 5'-AAAAGGTCA-3' site and as homodimers to the Nur response element (NurRE) site in the promoter of their regulated target genes. Plays a role in the regulation of proliferation, survival and differentiation of many different cell types and also in metabolism and inflammation. Mediates proliferation of vascular smooth muscle, myeloid progenitor cell and type B pancreatic cells; promotes mitogen-induced vascular smooth muscle cell proliferation through transactivation of SKP2 promoter by binding a NBRE site. Upon PDGF stimulation, stimulates vascular smooth muscle cell proliferation by regulating CCND1 and CCND2 expression. In islets, induces type B pancreatic cell proliferation through up-regulation of genes that activate cell cycle, as well as genes that cause degradation of the CDKN1A. Negatively regulates myeloid progenitor cell proliferation by repressing RUNX1 in a NBRE site-independent manner. During inner ear, plays a role as a key mediator of the proliferative growth phase of semicircular canal development. Also mediates survival of neuron and smooth muscle cells; mediates CREB-induced neuronal survival, and during hippocampus development, plays a critical role in pyramidal cell survival and axonal guidance. Is required for S phase entry of the cell cycle and survival of smooth muscle cells by inducing CCND1, resulting in RB1 phosphorylation. Binds to NBRE motif in CCND1 promoter, resulting in the activation of the promoter and CCND1 transcription. Also plays a role in inflammation; upon TNF stimulation, mediates monocyte adhesion by inducing the expression of VCAM1 and ICAM1 by binding to the NBRE consensus site. In mast cells activated by Fc-epsilon receptor cross-linking, promotes the synthesis and release of cytokines but impairs events leading to degranulation. Also plays a role in metabolism; by modulating feeding behavior; and by playing a role in energy balance by inhibiting the glucocorticoid-induced orexigenic neuropeptides AGRP expression, at least in part by forming a complex with activated NR3C1 on the AGRP- glucocorticoid response element (GRE), and thus weakening the DNA binding activity of NR3C1. Upon catecholamines stimulation, regulates gene expression that controls oxidative metabolism in skeletal muscle. Plays a role in glucose transport by regulating translocation of the SLC2A4 glucose transporter to the cell surface. Finally, during gastrulation plays a crucial role in the formation of anterior mesoderm by controlling cell migration. Inhibits adipogenesis. Also participates in cardiac hypertrophy by activating PARP1. The polypeptide is Nuclear receptor subfamily 4 group A member 3 (NR4A3) (Homo sapiens (Human)).